The chain runs to 393 residues: 4-hydroxyphenylpyruvate dioxygenase (393 aa).

The residue at position 2 (threonine 2) is an N-acetylthreonine. VOC domains are found at residues histidine 18–lysine 149 and isoleucine 180–lysine 338. An N6-succinyllysine modification is found at lysine 132. Histidine 183 contacts Fe cation. 3 positions are modified to phosphoserine: serine 211, serine 226, and serine 250. Positions 266 and 349 each coordinate Fe cation.

It belongs to the 4HPPD family. Homodimer. Fe cation serves as cofactor.

Its subcellular location is the cytoplasm. It localises to the endoplasmic reticulum membrane. The protein localises to the golgi apparatus membrane. It carries out the reaction 3-(4-hydroxyphenyl)pyruvate + O2 = homogentisate + CO2. The protein operates within amino-acid degradation; L-phenylalanine degradation; acetoacetate and fumarate from L-phenylalanine: step 3/6. Its function is as follows. Catalyzes the conversion of 4-hydroxyphenylpyruvic acid to homogentisic acid, one of the steps in tyrosine catabolism. The protein is 4-hydroxyphenylpyruvate dioxygenase (Hpd) of Mus musculus (Mouse).